A 185-amino-acid chain; its full sequence is Ribosome-recycling factor (185 aa).

The tract at residues 137-159 (EDLKADEKAKDISEDDRKRMEDE) is disordered.

Belongs to the RRF family.

It is found in the cytoplasm. Functionally, responsible for the release of ribosomes from messenger RNA at the termination of protein biosynthesis. May increase the efficiency of translation by recycling ribosomes from one round of translation to another. This is Ribosome-recycling factor from Erythrobacter litoralis (strain HTCC2594).